We begin with the raw amino-acid sequence, 185 residues long: Ribosome-recycling factor (185 aa).

It belongs to the RRF family.

The protein localises to the cytoplasm. Its function is as follows. Responsible for the release of ribosomes from messenger RNA at the termination of protein biosynthesis. May increase the efficiency of translation by recycling ribosomes from one round of translation to another. In Coxiella burnetii (strain RSA 493 / Nine Mile phase I), this protein is Ribosome-recycling factor.